Consider the following 306-residue polypeptide: Anamorsin homolog (306 aa).

Residues 1–25 (MVPPREDVTVRIVCERRRTAGKEAR) show a composition bias toward basic and acidic residues. The segment at 1–51 (MVPPREDVTVRIVCERRRTAGKEARPPPSAKPTPGNTSSHPNAKETHRSNE) is disordered. Residues 59-190 (KQSHRRSIMA…RRNNTTNSVA (132 aa)) form an N-terminal SAM-like domain region. The linker stretch occupies residues 191 to 218 (TLNFASNNNNGNDLLIDEDNLLTDASNL). [2Fe-2S] cluster-binding residues include Cys236, Cys242, Cys245, and Cys247. The fe-S binding site A stretch occupies residues 236-247 (CSGRAPCDDCTC). Positions 252–265 (GAKEGNSEQPKEIK) are enriched in basic and acidic residues. The interval 252–272 (GAKEGNSEQPKEIKSSSCGKC) is disordered. Positions 269, 272, 280, and 283 each coordinate [4Fe-4S] cluster. Short sequence motifs (cx2C motif) lie at residues 269 to 272 (CGKC) and 280 to 283 (CASC). A fe-S binding site B region spans residues 269-283 (CGKCSLGDAFRCASC).

It belongs to the anamorsin family. Monomer. The cofactor is [2Fe-2S] cluster. [4Fe-4S] cluster is required as a cofactor.

It is found in the cytoplasm. Its subcellular location is the mitochondrion intermembrane space. Its function is as follows. Component of the cytosolic iron-sulfur (Fe-S) protein assembly (CIA) machinery. Required for the maturation of extramitochondrial Fe-S proteins. Part of an electron transfer chain functioning in an early step of cytosolic Fe-S biogenesis, facilitating the de novo assembly of a [4Fe-4S] cluster on the cytosolic Fe-S scaffold complex. Electrons are transferred from NADPH via a FAD- and FMN-containing diflavin oxidoreductase. Together with the diflavin oxidoreductase, also required for the assembly of the diferric tyrosyl radical cofactor of ribonucleotide reductase (RNR), probably by providing electrons for reduction during radical cofactor maturation in the catalytic small subunit. The chain is Anamorsin homolog from Phaeodactylum tricornutum (strain CCAP 1055/1).